The primary structure comprises 128 residues: MTHSSQDAGSHGIQEEGRLYVVDSINDLNKLSLCPMESQHLFSLEDKIPNAGTAPGNGRRGLFFVGLLLVLTVSLALVFFAIFLIIQTGNQMEDVSRRLTAEGKDIDDLKKINNMIVKRLNQLDSEQN.

Residue Ser24 is modified to Phosphoserine. The helical transmembrane segment at 66 to 86 (GLLLVLTVSLALVFFAIFLII) threads the bilayer. Residues 90–111 (NQMEDVSRRLTAEGKDIDDLKK) adopt a coiled-coil conformation.

The protein localises to the membrane. This is Leucine-rich single-pass membrane protein 1 (Lsmem1) from Mus musculus (Mouse).